The chain runs to 310 residues: Pantothenate kinase (310 aa).

Position 95 to 102 (95 to 102 (GSVAVGKS)) interacts with ATP.

Belongs to the prokaryotic pantothenate kinase family.

The protein resides in the cytoplasm. The catalysed reaction is (R)-pantothenate + ATP = (R)-4'-phosphopantothenate + ADP + H(+). Its pathway is cofactor biosynthesis; coenzyme A biosynthesis; CoA from (R)-pantothenate: step 1/5. This is Pantothenate kinase from Rhodococcus jostii (strain RHA1).